Consider the following 800-residue polypeptide: Phenylalanine--tRNA ligase beta subunit (800 aa).

The tRNA-binding domain maps to 39–154 (TKDIKNLVVG…ESQVPGTDAL (116 aa)). Residues 408-483 (AFITPIDITA…RIYGYDDIPS (76 aa)) form the B5 domain. Residues Asp461, Asp467, Glu470, and Glu471 each contribute to the Mg(2+) site. Positions 708 to 800 (PRFPGMSRDI…ALIEQGAVIR (93 aa)) constitute an FDX-ACB domain.

This sequence belongs to the phenylalanyl-tRNA synthetase beta subunit family. Type 1 subfamily. In terms of assembly, tetramer of two alpha and two beta subunits. Requires Mg(2+) as cofactor.

It localises to the cytoplasm. The catalysed reaction is tRNA(Phe) + L-phenylalanine + ATP = L-phenylalanyl-tRNA(Phe) + AMP + diphosphate + H(+). The chain is Phenylalanine--tRNA ligase beta subunit from Staphylococcus aureus (strain Mu50 / ATCC 700699).